The primary structure comprises 541 residues: Chaperonin GroEL 1 (541 aa).

Residues 29–32, 86–90, G413, 479–481, and D495 contribute to the ATP site; these read TLGP, DGTTT, and NAA.

The protein belongs to the chaperonin (HSP60) family. Forms a cylinder of 14 subunits composed of two heptameric rings stacked back-to-back. Interacts with the co-chaperonin GroES.

The protein resides in the cytoplasm. The enzyme catalyses ATP + H2O + a folded polypeptide = ADP + phosphate + an unfolded polypeptide.. Functionally, together with its co-chaperonin GroES, plays an essential role in assisting protein folding. The GroEL-GroES system forms a nano-cage that allows encapsulation of the non-native substrate proteins and provides a physical environment optimized to promote and accelerate protein folding. In Synechocystis sp. (strain ATCC 27184 / PCC 6803 / Kazusa), this protein is Chaperonin GroEL 1.